The primary structure comprises 407 residues: Probable tRNA sulfurtransferase (407 aa).

The 105-residue stretch at Asn-61–Val-165 folds into the THUMP domain. ATP-binding positions include Met-183–Leu-184, His-208–Phe-209, Arg-265, Gly-287, and Gln-296.

This sequence belongs to the ThiI family.

It is found in the cytoplasm. It carries out the reaction [ThiI sulfur-carrier protein]-S-sulfanyl-L-cysteine + a uridine in tRNA + 2 reduced [2Fe-2S]-[ferredoxin] + ATP + H(+) = [ThiI sulfur-carrier protein]-L-cysteine + a 4-thiouridine in tRNA + 2 oxidized [2Fe-2S]-[ferredoxin] + AMP + diphosphate. The enzyme catalyses [ThiS sulfur-carrier protein]-C-terminal Gly-Gly-AMP + S-sulfanyl-L-cysteinyl-[cysteine desulfurase] + AH2 = [ThiS sulfur-carrier protein]-C-terminal-Gly-aminoethanethioate + L-cysteinyl-[cysteine desulfurase] + A + AMP + 2 H(+). It participates in cofactor biosynthesis; thiamine diphosphate biosynthesis. Catalyzes the ATP-dependent transfer of a sulfur to tRNA to produce 4-thiouridine in position 8 of tRNAs, which functions as a near-UV photosensor. Also catalyzes the transfer of sulfur to the sulfur carrier protein ThiS, forming ThiS-thiocarboxylate. This is a step in the synthesis of thiazole, in the thiamine biosynthesis pathway. The sulfur is donated as persulfide by IscS. The protein is Probable tRNA sulfurtransferase of Staphylococcus aureus (strain MRSA252).